A 92-amino-acid chain; its full sequence is MNKTELIAKVAEKQGVSKKEGAPSVEKVFDTISEALKSGEKVSIPGFGTFEVRERAARKGRNPQTGEEIDIPATKAPAFKPAKALKDAVKAK.

T4 carries the phosphothreonine modification. The disordered stretch occupies residues 55 to 77 (RAARKGRNPQTGEEIDIPATKAP).

Belongs to the bacterial histone-like protein family. As to quaternary structure, homodimer.

In terms of biological role, histone-like DNA-binding protein which is capable of wrapping DNA to stabilize it, and thus to prevent its denaturation under extreme environmental conditions. This is SPbeta prophage-derived DNA-binding protein HU 2 (hup2) from Bacillus subtilis (strain 168).